Here is a 143-residue protein sequence, read N- to C-terminus: Boletus edulis lectin (143 aa).

Residues A30, 49–50 (SG), and 72–73 (HN) contribute to the beta-D-Gal-(1-&gt;3)-alpha-D-GalNAc site. N-acetyl-alpha-D-galactosamine-binding positions include 49–50 (SG) and 72–73 (HN). N,N'-diacetylchitobiose is bound by residues 79–82 (DVVT), R103, and Y114. Residues 79–82 (DVVT), R103, and Y114 each bind N-acetyl-alpha-D-glucosamine.

Belongs to the fungal fruit body lectin family. As to quaternary structure, homotetramer.

Its function is as follows. Lectin that recognizes O-linked galactose-beta-1,3-N-acetylgalactosamine, a disaccharide (Thomsen-Friedenreich antigen or T-disaccharide), present on cell surface glycoproteins. Can also bind chitin, N,N'-diacetylchitobiose, N-acetylgalactosamine and N-acetylglucosamine. Inhibits proliferation of colon, breast and liver cancer cell lines (in vitro). The chain is Boletus edulis lectin from Boletus edulis (King bolete).